The primary structure comprises 732 residues: Guanylate cyclase soluble subunit alpha-2 (732 aa).

The interval 1 to 58 (MSRRKISSESFSSLGSDYLETSPEEEGECPLSRLCWNGSRSPPGPLEPSPAAAAAAAA) is disordered. Over residues 49–58 (SPAAAAAAAA) the composition is skewed to low complexity. A Guanylate cyclase domain is found at 521–648 (TMLFSDIVGF…NNVTLASKFE (128 aa)).

It belongs to the adenylyl cyclase class-4/guanylyl cyclase family. Heterodimer of an alpha and a beta chain. In terms of tissue distribution, isoform 1 is expressed in fetal brain, liver, colon, endothelium and testis. Isoform 2 is expressed only in liver, colon and endothelium.

The protein localises to the cytoplasm. The catalysed reaction is GTP = 3',5'-cyclic GMP + diphosphate. Its activity is regulated as follows. Activated by nitric oxide in the presence of magnesium or manganese ions. In terms of biological role, has guanylyl cyclase on binding to the beta-1 subunit. Functionally, isoform 2 acts as a negative regulator of guanylyl cyclase activity as it forms non-functional heterodimers with the beta subunits. The chain is Guanylate cyclase soluble subunit alpha-2 (GUCY1A2) from Homo sapiens (Human).